Here is a 428-residue protein sequence, read N- to C-terminus: Glutamine synthetase, chloroplastic (428 aa).

The transit peptide at 1–49 directs the protein to the chloroplast; sequence MAQILAASPTCQMRLTKPSSIASSKLWNSVVLKQKKQSSSKVRSFKVMA. A GS beta-grasp domain is found at 75–155; it reads IIAEYIWIGG…VICDTYTPAG (81 aa). The segment at 94–120 is disordered; it reads RTLEKPVEDPSELPKWNYDGSSTGQAP. Ser104 is subject to Phosphoserine. In terms of domain architecture, GS catalytic spans 159–428; the sequence is PTNKRARAAE…LAAQKLSLKV (270 aa).

Belongs to the glutamine synthetase family. Homooctamer.

The protein resides in the plastid. Its subcellular location is the chloroplast. The catalysed reaction is L-glutamate + NH4(+) + ATP = L-glutamine + ADP + phosphate + H(+). Functionally, the light-modulated chloroplast enzyme, encoded by a nuclear gene and expressed primarily in leaves, is responsible for the reassimilation of the ammonia generated by photorespiration. This chain is Glutamine synthetase, chloroplastic (GLN2), found in Brassica napus (Rape).